A 435-amino-acid polypeptide reads, in one-letter code: Putative acid phosphatase F26C11.1 (435 aa).

The active-site Nucleophile is the histidine 38. The active-site Proton donor is the aspartate 317. A disulfide bridge links cysteine 382 with cysteine 388.

This sequence belongs to the histidine acid phosphatase family.

The catalysed reaction is a phosphate monoester + H2O = an alcohol + phosphate. In Caenorhabditis elegans, this protein is Putative acid phosphatase F26C11.1.